Reading from the N-terminus, the 182-residue chain is NADH-quinone oxidoreductase subunit B 1 (182 aa).

Residues C47, C48, C113, and C142 each contribute to the [4Fe-4S] cluster site.

The protein belongs to the complex I 20 kDa subunit family. In terms of assembly, NDH-1 is composed of 14 different subunits. Subunits NuoB, C, D, E, F, and G constitute the peripheral sector of the complex. [4Fe-4S] cluster is required as a cofactor.

Its subcellular location is the cell inner membrane. It catalyses the reaction a quinone + NADH + 5 H(+)(in) = a quinol + NAD(+) + 4 H(+)(out). NDH-1 shuttles electrons from NADH, via FMN and iron-sulfur (Fe-S) centers, to quinones in the respiratory chain. Couples the redox reaction to proton translocation (for every two electrons transferred, four hydrogen ions are translocated across the cytoplasmic membrane), and thus conserves the redox energy in a proton gradient. The polypeptide is NADH-quinone oxidoreductase subunit B 1 (Anaeromyxobacter dehalogenans (strain 2CP-C)).